The sequence spans 690 residues: MQPLLLEIGSEEIPAGYIVPALEALAQALDAKLESARIAHSKPKVYGTPRRLAVILDEVAEKQESVTTEMVGPPKSVAFDGEGKPKVPAVKFAEKAGVAVEELTFQETEKGVYLCAKIQDEGKETLGILQEMLPEIISHIPFPKSMRWAALPGTFARPVFSILALLGDQVIPFEWNGVTTGRQTRGHYFMAPEAIDIQTPSEYVNALEKAKVIADIPTRRKMVKEGVDAIAKELGGDAIEDEELVDIVANLVEFPAPVGGKFETGFLEVPDKVLITAMREHQKYFAIQDKDGKLMPCFVAVNNTQCKDPQLVATGHERVLRARLSDAKFFWDVDKKQSMEDWVKRLDRVLFQKKLGSVGEKVARVEEMAKFLAAAPEINGDPDKAQKAAHFCKADLVSGLVIEFTKLQGVMGKAYASLAGMDAETASALEEHYLPAYSGGPLPRTKTGDAVAMADKMDSLCGCFAVGLIPSGNRDPYALRRQGIGVIRILQEKGYSLSLSAIVDKGLTLVKDKADQNLAETRDKIISFLADRMAHMLAEQGFSKDVIQAAVAISCDDIPYLWKRVAAVEKLKTLPDYEALAQTFKRVANIIKQAAEKGTLSDQEVNPALFEKDCEKDLLEAFTAMEAKVSGLGVDEALLEVAKLRPAVDAFFDDVMVMAEDMKVRENRLALLAGIAGLFGRFADFSRISA.

It belongs to the class-II aminoacyl-tRNA synthetase family. Tetramer of two alpha and two beta subunits.

It localises to the cytoplasm. The catalysed reaction is tRNA(Gly) + glycine + ATP = glycyl-tRNA(Gly) + AMP + diphosphate. The polypeptide is Glycine--tRNA ligase beta subunit (Desulfatibacillum aliphaticivorans).